A 273-amino-acid polypeptide reads, in one-letter code: Glutamate transport system permease protein GluD (273 aa).

A run of 5 helical transmembrane segments spans residues 26–46 (ILPG…LALV), 64–84 (WFCA…LMIF), 100–120 (LAFA…IAEI), 150–170 (ILLP…MVIA), and 200–220 (LAAL…LTAL). The 192-residue stretch at 30-221 (LWGTLKSAVF…VLNFSLTALA (192 aa)) folds into the ABC transmembrane type-1 domain. Residues 242-273 (PEQPDQGLETKDNVNVDWQDPDYKDLKTPGVQ) form a disordered region. Residues 262–273 (PDYKDLKTPGVQ) show a composition bias toward basic and acidic residues.

This sequence belongs to the binding-protein-dependent transport system permease family. HisMQ subfamily. In terms of assembly, the complex is composed of two ATP-binding proteins (GluA), two transmembrane proteins (GluC and GluD) and a solute-binding protein (GluB).

The protein localises to the cell membrane. Part of the ABC transporter complex GluABCD involved in glutamate uptake. Probably responsible for the translocation of the substrate across the membrane. The protein is Glutamate transport system permease protein GluD of Corynebacterium glutamicum (strain ATCC 13032 / DSM 20300 / JCM 1318 / BCRC 11384 / CCUG 27702 / LMG 3730 / NBRC 12168 / NCIMB 10025 / NRRL B-2784 / 534).